The primary structure comprises 308 residues: Phenylcoumaran benzylic ether reductase Pyrc5 (308 aa).

Residues 11 to 17 (GGTGYIG), Arg-36, and Lys-45 contribute to the NADP(+) site. Lys-133 acts as the Proton acceptor in catalysis. Arg-137 serves as a coordination point for NADP(+).

It belongs to the NmrA-type oxidoreductase family. Isoflavone reductase subfamily.

It catalyses the reaction (-)-dehydrodiconiferyl alcohol + NADPH + H(+) = (S)-isodihydrodehydrodiconiferyl alcohol + NADP(+). The enzyme catalyses (+)-dehydrodiconiferyl alcohol + NADPH + H(+) = (R)-isodihydrodehydrodiconiferyl alcohol + NADP(+). Functionally, oxidoreductase involved in lignan biosynthesis. Catalyzes the NADPH-dependent reduction of phenylcoumaran benzylic ethers. Converts dehydrodiconiferyl alcohol (DDC) to isodihydrodehydrodiconiferyl alcohol (IDDDC). In Pyrus communis (Pear), this protein is Phenylcoumaran benzylic ether reductase Pyrc5.